A 330-amino-acid chain; its full sequence is Ribosomal RNA small subunit methyltransferase H (330 aa).

S-adenosyl-L-methionine is bound by residues 35–37, Asp53, Phe80, Asp101, and Gln108; that span reads GGY.

This sequence belongs to the methyltransferase superfamily. RsmH family.

It is found in the cytoplasm. It catalyses the reaction cytidine(1402) in 16S rRNA + S-adenosyl-L-methionine = N(4)-methylcytidine(1402) in 16S rRNA + S-adenosyl-L-homocysteine + H(+). Specifically methylates the N4 position of cytidine in position 1402 (C1402) of 16S rRNA. The protein is Ribosomal RNA small subunit methyltransferase H of Rhodopseudomonas palustris (strain BisB18).